Reading from the N-terminus, the 442-residue chain is Plasmalemma vesicle-associated protein (442 aa).

Topologically, residues 1–27 (MGLAMEHGGSYARAGGSSRGCWYYLRY) are cytoplasmic. Residues 28–48 (FFLFVSLIQFLIILGLVLFMV) form a helical; Signal-anchor for type II membrane protein membrane-spanning segment. Residues 49–442 (YGNVHVSTES…AGIPVAPSSG (394 aa)) are Extracellular-facing. A coiled-coil region spans residues 57–77 (ESNLQATERRAEGLYSQLLGL). Residues asparagine 83, asparagine 89, asparagine 113, and asparagine 151 are each glycosylated (N-linked (GlcNAc...) asparagine). 2 coiled-coil regions span residues 202–225 (KTRE…QALC) and 280–387 (SSKV…SALD). 2 disordered regions span residues 301–328 (NSDL…VEKE) and 394–418 (SQPM…PASL). The span at 319–328 (QEAKQKVEKE) shows a compositional bias: basic and acidic residues.

Homodimer. In terms of tissue distribution, expressed in lung, kidney, heart, aorta, placenta, muscle, pituitary gland, adrenals, mammary gland, bladder, lymph node, bone marrow, trachea, digestive tract, liver and tumor-associated endothelium.

It is found in the cell membrane. The protein resides in the membrane. Its subcellular location is the caveola. It localises to the cytoplasm. The protein localises to the perinuclear region. Its function is as follows. Endothelial cell-specific membrane protein involved in the formation of the diaphragms that bridge endothelial fenestrae. It is also required for the formation of stomata of caveolae and transendothelial channels. Functions in microvascular permeability, endothelial fenestrae contributing to the passage of water and solutes and regulating transcellular versus paracellular flow in different organs. Plays a specific role in embryonic development. In Homo sapiens (Human), this protein is Plasmalemma vesicle-associated protein (PLVAP).